Consider the following 161-residue polypeptide: Peroxynitrite isomerase 2 (161 aa).

Residues 17-23 (GTWAGQG) carry the GXWXGXG motif. Residue H152 participates in heme b binding.

It belongs to the nitrobindin family. As to quaternary structure, homodimer. Heme b is required as a cofactor.

It carries out the reaction peroxynitrite = nitrate. The protein operates within nitrogen metabolism. Its function is as follows. Heme-binding protein able to scavenge peroxynitrite and to protect free L-tyrosine against peroxynitrite-mediated nitration, by acting as a peroxynitrite isomerase that converts peroxynitrite to nitrate. Therefore, this protein likely plays a role in peroxynitrite sensing and in the detoxification of reactive nitrogen and oxygen species (RNS and ROS, respectively). Is able to bind nitric oxide (NO) in vitro, but may act as a sensor of peroxynitrite levels in vivo. This is Peroxynitrite isomerase 2 from Mycobacterium ulcerans (strain Agy99).